Reading from the N-terminus, the 503-residue chain is Alpha-1B-glycoprotein (503 aa).

The N-terminal stretch at 1–21 (MSAWAALLLLWGLSLSPVTEQ) is a signal peptide. Ig-like V-type domains lie at 27 to 115 (PRPS…EVTG), 117 to 204 (EPLP…TVTI), 208 to 305 (DPPP…LVLS), 307 to 405 (GTLP…LRVD), and 406 to 501 (GPLP…LRVA). A disulfide bond links cysteine 49 and cysteine 96. N-linked (GlcNAc...) asparagine glycosylation is found at asparagine 137 and asparagine 182. Disulfide bonds link cysteine 142/cysteine 185, cysteine 235/cysteine 282, cysteine 333/cysteine 382, and cysteine 431/cysteine 478. Asparagine 379 carries an N-linked (GlcNAc...) asparagine glycan.

In terms of assembly, interacts with CRISP3. Plasma.

It is found in the secreted. The protein is Alpha-1B-glycoprotein of Bos taurus (Bovine).